Reading from the N-terminus, the 198-residue chain is MLITLEGIDGAGKSTLYEGLKTRLQDLEPVFTKEPGSPLVNSAVRREIGANRDPFAEATLFVADHAAHLAQVVLPALEEKKLVISDRYSDSRFAYQQVSLIGIVPDPKAWLTAVHAGWSVRPDLTILLLISPETAMNRLHERPGKEHFEDPAFLEEVQKKYLERVTEDPERFLLIDAAQEPETILDFVEKSIRALPRQ.

7 to 14 (GIDGAGKS) contributes to the ATP binding site.

It belongs to the thymidylate kinase family.

The enzyme catalyses dTMP + ATP = dTDP + ADP. The chain is Probable thymidylate kinase from Methanocorpusculum labreanum (strain ATCC 43576 / DSM 4855 / Z).